We begin with the raw amino-acid sequence, 242 residues long: Uridylate kinase (242 aa).

Residue 11 to 14 (KLSG) coordinates ATP. G53 is a binding site for UMP. The ATP site is built by G54 and R58. UMP is bound by residues D73 and 134–141 (SGNPFFTT). ATP-binding residues include T161, Y167, and D170.

The protein belongs to the UMP kinase family. As to quaternary structure, homohexamer.

Its subcellular location is the cytoplasm. It carries out the reaction UMP + ATP = UDP + ADP. It participates in pyrimidine metabolism; CTP biosynthesis via de novo pathway; UDP from UMP (UMPK route): step 1/1. Inhibited by UTP. Its function is as follows. Catalyzes the reversible phosphorylation of UMP to UDP. The polypeptide is Uridylate kinase (Thermosynechococcus vestitus (strain NIES-2133 / IAM M-273 / BP-1)).